Here is a 47-residue protein sequence, read N- to C-terminus: PhoP/PhoQ regulator MgrB (47 aa).

Residues 6 to 26 (WLVLIVVVLACLVLWAQVINI) form a helical membrane-spanning segment.

Belongs to the MgrB family. May form homooligomers. Probably interacts with the periplasmic domain of PhoQ.

It localises to the cell inner membrane. Its function is as follows. PhoP-regulated transcription is redox-sensitive, being activated when the periplasm becomes more reducing. MgrB acts between DsbA/DsbB and PhoP/PhoQ in this pathway. Represses PhoP/PhoQ signaling, possibly by binding to the periplasmic domain of PhoQ, altering its activity and that of downstream effector PhoP. The chain is PhoP/PhoQ regulator MgrB from Escherichia fergusonii (strain ATCC 35469 / DSM 13698 / CCUG 18766 / IAM 14443 / JCM 21226 / LMG 7866 / NBRC 102419 / NCTC 12128 / CDC 0568-73).